Here is a 900-residue protein sequence, read N- to C-terminus: Exosome complex component 10 homolog (900 aa).

Disordered stretches follow at residues 1–31 (MPRT…SEDV) and 147–174 (TSIE…TGTP). Over residues 8–28 (VHQEAKEESAQADQPPKKSAS) the composition is skewed to basic and acidic residues. Residues 273–438 (VVDTVEKLKQ…YVYGRMTNDL (166 aa)) enclose the 3'-5' exonuclease domain. Residues D296, E298, D354, and D423 each coordinate Mg(2+). The HRDC domain maps to 485–565 (DNRQLYALRG…LKARDQPLVK (81 aa)). Residues 731–900 (EQLKRKHPQA…FSNVRKEGKK (170 aa)) form a disordered region. Basic residues predominate over residues 809-826 (RKQKKNQFQRGFKAKNRG). Over residues 878–887 (NNRNNKQFNK) the composition is skewed to low complexity.

Belongs to the exosome component 10/RRP6 family. As to quaternary structure, component of the RNA exosome complex. Interacts with spn-A/Rad51; the interaction is required for the recruitment of spn-A to the DNA-damage response foci. Interacts with Su(var)3-9, a heterochromatin factor; the interaction promotes association of Rrp6 with a subset of genomic loci. Interacts with Su(var)205, a heterochromatin factor. Interacts with HDAC1, a heterochromatin factor. It depends on Mg(2+) as a cofactor. In terms of tissue distribution, salivary gland (at protein level).

The protein resides in the nucleus. Its subcellular location is the chromosome. It localises to the cytoplasm. It is found in the cell cortex. The protein localises to the cytoskeleton. The protein resides in the microtubule organizing center. Its subcellular location is the centrosome. It localises to the spindle. It is found in the midbody. Functionally, catalytic component of the RNA exosome complex which has 3'-&gt;5' exoribonuclease activity and participates in a multitude of cellular RNA processing and degradation events. Degrades a large variety of non-coding RNAs that are processed by the exosome, such as pre-rRNAs and some small nucleolar RNAs (snoRNAs). Degrades transcripts derived from different types of heterochromatic repeats, such as subtelomeric minisatellites and simple gagaa repeats. Degrades transcripts derived from transposons and transposon fragments. Degrades chromatin-associated transcripts and contributes to the compaction of heterochromatin. Required for the efficient repair of DNA double-strand breaks via homologous recombination after irradiation. Required for cell proliferation and error-free mitosis. This Drosophila melanogaster (Fruit fly) protein is Exosome complex component 10 homolog.